The chain runs to 439 residues: Xylose isomerase (439 aa).

Residues His-101 and Asp-104 contribute to the active site. Residues Glu-232, Glu-268, His-271, Asp-296, Asp-307, Asp-309, and Asp-339 each coordinate Mg(2+).

Belongs to the xylose isomerase family. Homotetramer. The cofactor is Mg(2+).

The protein resides in the cytoplasm. It catalyses the reaction alpha-D-xylose = alpha-D-xylulofuranose. The sequence is that of Xylose isomerase from Haemophilus influenzae (strain 86-028NP).